We begin with the raw amino-acid sequence, 135 residues long: Putative pre-16S rRNA nuclease (135 aa).

This sequence belongs to the YqgF nuclease family.

It is found in the cytoplasm. Its function is as follows. Could be a nuclease involved in processing of the 5'-end of pre-16S rRNA. The sequence is that of Putative pre-16S rRNA nuclease from Clostridium acetobutylicum (strain ATCC 824 / DSM 792 / JCM 1419 / IAM 19013 / LMG 5710 / NBRC 13948 / NRRL B-527 / VKM B-1787 / 2291 / W).